We begin with the raw amino-acid sequence, 1002 residues long: Mannan endo-1,4-beta-mannosidase (1002 aa).

The first 28 residues, 1–28 (MKTTVTKLLATVAAASTIFGMSTLPAFA), serve as a signal peptide directing secretion. Residues 49–396 (AETRALFDKL…ADSNKNLMAS (348 aa)) form the GH26 domain. Position 144 (histidine 144) interacts with substrate. Glutamate 205 acts as the Proton donor in catalysis. Substrate is bound by residues tryptophan 210 and tyrosine 278. The Nucleophile role is filled by glutamate 316. Position 384 (lysine 384) interacts with substrate. CBM11 domains are found at residues 523 to 703 (VDNV…GKRD) and 717 to 897 (AKAQ…NEQT). Disordered stretches follow at residues 702 to 722 (RDAY…AQSV) and 888 to 969 (PAEN…LSRT). Positions 707–719 (PNTNPTPGNTAKA) are enriched in polar residues. Composition is skewed to basic and acidic residues over residues 897 to 913 (TPKD…KEQE) and 952 to 966 (PDTK…KDGL). The LPXTG sorting signal motif lies at 966–970 (LSRTG). Threonine 969 carries the pentaglycyl murein peptidoglycan amidated threonine modification. A propeptide spans 970 to 1002 (GSNIISAIAAVAVLLLGGCAVLIARKRKGGDIE) (removed by sortase).

This sequence belongs to the glycosyl hydrolase 26 family. As to quaternary structure, homodimer.

It is found in the secreted. The protein localises to the cell wall. The enzyme catalyses Random hydrolysis of (1-&gt;4)-beta-D-mannosidic linkages in mannans, galactomannans and glucomannans.. Its function is as follows. Beta-mannanase likely involved in the utilization of carbohydrates in the human gut. Catalyzes the hydrolysis of different beta-1,4-linked mannans, such as ivory nut mannan, konjac glucomannan, as well as carob and guar gum galactomannans, to a mixture of oligosaccharides. The dominant product from ivory nut mannan is found to be mannotriose; mannobiose and mannotetraose are produced to a lesser extent. Does not hydrolyze mannobiose, and hydrolyzes mannotriose at a significantly lower rate than the longer oligosaccharides. The polypeptide is Mannan endo-1,4-beta-mannosidase (Bifidobacterium adolescentis (strain ATCC 15703 / DSM 20083 / NCTC 11814 / E194a)).